The chain runs to 660 residues: Oligopeptide-binding protein AliA (660 aa).

The signal sequence occupies residues 1 to 22 (MKSSKLFALAGVTLLAATTLAA). Cys23 carries N-palmitoyl cysteine lipidation. The S-diacylglycerol cysteine moiety is linked to residue Cys23. The segment at 638-660 (EKWMKEKEESNKKAQEDLAKHVK) is disordered.

This sequence belongs to the bacterial solute-binding protein 5 family.

It localises to the cell membrane. In terms of biological role, part of the binding-protein-dependent transport system for oligopeptides; probably an oligopeptide binding protein. The protein is Oligopeptide-binding protein AliA (aliA) of Streptococcus pneumoniae serotype 4 (strain ATCC BAA-334 / TIGR4).